Consider the following 283-residue polypeptide: NAD kinase (283 aa).

The Proton acceptor role is filled by Asp67. NAD(+) contacts are provided by residues 67–68 (DG), Arg72, 136–137 (NE), Lys147, Arg164, Asp166, 177–182 (TAYSMS), and Gln236.

The protein belongs to the NAD kinase family. A divalent metal cation is required as a cofactor.

The protein localises to the cytoplasm. The catalysed reaction is NAD(+) + ATP = ADP + NADP(+) + H(+). Functionally, involved in the regulation of the intracellular balance of NAD and NADP, and is a key enzyme in the biosynthesis of NADP. Catalyzes specifically the phosphorylation on 2'-hydroxyl of the adenosine moiety of NAD to yield NADP. In Methanothermobacter thermautotrophicus (strain ATCC 29096 / DSM 1053 / JCM 10044 / NBRC 100330 / Delta H) (Methanobacterium thermoautotrophicum), this protein is NAD kinase.